A 206-amino-acid polypeptide reads, in one-letter code: Probable NAD(+) phosphorylase Rv3189 (206 aa).

This sequence belongs to the MbcT/ParT/Res family. As to quaternary structure, forms a heterotetramer with cognate antitoxin Rv3188.

It carries out the reaction phosphate + NAD(+) = ADP-alpha-D-ribose 1''-phosphate + nicotinamide + H(+). Probable toxic component of a type II toxin-antitoxin (TA) system. Degrades NAD(+) by phosphorolysis. Neutralized by its cognate antitoxin Rv3188. In Mycobacterium tuberculosis (strain ATCC 25618 / H37Rv), this protein is Probable NAD(+) phosphorylase Rv3189.